A 295-amino-acid polypeptide reads, in one-letter code: Ankyrin repeat and SOCS box protein 17 (295 aa).

Residues 146 to 176 (SGITPLLYVAQTRQSNILKILLQYGILEREK) form an ANK repeat. The SOCS box domain occupies 243-295 (DYIPPTRYKDPCELVHLCRITIRTQLLANNMLPNGIFSLLIPTRLQNFLNLES).

Belongs to the ankyrin SOCS box (ASB) family. In terms of tissue distribution, specifically expressed in testis. Localizes to spermatogenic cells in testis, with highest expression in round spermatids and condensing spermatids and lower expression in pachytene spermatocytes.

Its pathway is protein modification; protein ubiquitination. In terms of biological role, may be a substrate-recognition component of a SCF-like ECS (Elongin-Cullin-SOCS-box protein) E3 ubiquitin-protein ligase complex which mediates the ubiquitination and subsequent proteasomal degradation of target proteins. In Mus musculus (Mouse), this protein is Ankyrin repeat and SOCS box protein 17 (Asb17).